Consider the following 356-residue polypeptide: Glycerol-3-phosphate dehydrogenase [NAD(P)+] (356 aa).

Residues Trp-12, Arg-32, Arg-33, and Lys-117 each contribute to the NADPH site. Lys-117, Gly-151, and Ser-153 together coordinate sn-glycerol 3-phosphate. Ala-155 serves as a coordination point for NADPH. Lys-206, Asp-265, Arg-276, and Asn-277 together coordinate sn-glycerol 3-phosphate. The active-site Proton acceptor is the Lys-206. Residue Arg-276 participates in NADPH binding. Leu-309 and Glu-311 together coordinate NADPH.

This sequence belongs to the NAD-dependent glycerol-3-phosphate dehydrogenase family.

The protein localises to the cytoplasm. The catalysed reaction is sn-glycerol 3-phosphate + NAD(+) = dihydroxyacetone phosphate + NADH + H(+). It catalyses the reaction sn-glycerol 3-phosphate + NADP(+) = dihydroxyacetone phosphate + NADPH + H(+). The protein operates within membrane lipid metabolism; glycerophospholipid metabolism. In terms of biological role, catalyzes the reduction of the glycolytic intermediate dihydroxyacetone phosphate (DHAP) to sn-glycerol 3-phosphate (G3P), the key precursor for phospholipid synthesis. This is Glycerol-3-phosphate dehydrogenase [NAD(P)+] from Treponema pallidum (strain Nichols).